The following is a 194-amino-acid chain: Holliday junction branch migration complex subunit RuvA (194 aa).

The tract at residues 1–63 (MFEYLKGTVA…EDELSLYGFM (63 aa)) is domain I. The interval 64–142 (SIEELDMFQK…KTNVVYDYTL (79 aa)) is domain II. Residues 143-151 (FNDDHKDDD) are flexible linker. Positions 151–194 (DEAVQALMALGYSKLESEKAVEAVRDMSLGTEDVIKRALKWLMK) are domain III.

It belongs to the RuvA family. As to quaternary structure, homotetramer. Forms an RuvA(8)-RuvB(12)-Holliday junction (HJ) complex. HJ DNA is sandwiched between 2 RuvA tetramers; dsDNA enters through RuvA and exits via RuvB. An RuvB hexamer assembles on each DNA strand where it exits the tetramer. Each RuvB hexamer is contacted by two RuvA subunits (via domain III) on 2 adjacent RuvB subunits; this complex drives branch migration. In the full resolvosome a probable DNA-RuvA(4)-RuvB(12)-RuvC(2) complex forms which resolves the HJ.

The protein localises to the cytoplasm. Functionally, the RuvA-RuvB-RuvC complex processes Holliday junction (HJ) DNA during genetic recombination and DNA repair, while the RuvA-RuvB complex plays an important role in the rescue of blocked DNA replication forks via replication fork reversal (RFR). RuvA specifically binds to HJ cruciform DNA, conferring on it an open structure. The RuvB hexamer acts as an ATP-dependent pump, pulling dsDNA into and through the RuvAB complex. HJ branch migration allows RuvC to scan DNA until it finds its consensus sequence, where it cleaves and resolves the cruciform DNA. This Alkaliphilus oremlandii (strain OhILAs) (Clostridium oremlandii (strain OhILAs)) protein is Holliday junction branch migration complex subunit RuvA.